Reading from the N-terminus, the 153-residue chain is Endoribonuclease YbeY (153 aa).

Zn(2+) is bound by residues His-114, His-118, and His-124.

Belongs to the endoribonuclease YbeY family. Requires Zn(2+) as cofactor.

It localises to the cytoplasm. Functionally, single strand-specific metallo-endoribonuclease involved in late-stage 70S ribosome quality control and in maturation of the 3' terminus of the 16S rRNA. The chain is Endoribonuclease YbeY from Shewanella amazonensis (strain ATCC BAA-1098 / SB2B).